Reading from the N-terminus, the 1331-residue chain is ABC multidrug transporter MDR2 (1331 aa).

Basic and acidic residues-rich tracts occupy residues Met1 to Asn20 and Ser31 to Asn41. Positions Met1–Glu51 are disordered. 4 helical membrane-spanning segments follow: residues Met93–Phe113, Tyr147–Ile167, Lys219–Val239, and Trp242–Ile262. The ABC transmembrane type-1 1 domain maps to Ala97–Ser387. The N-linked (GlcNAc...) asparagine glycan is linked to Asn293. The next 2 helical transmembrane spans lie at Leu325–Trp345 and Leu358–Val378. The 246-residue stretch at Ile422–Ala667 folds into the ABC transporter 1 domain. Gly457–Ser464 is an ATP binding site. 2 N-linked (GlcNAc...) asparagine glycosylation sites follow: Asn529 and Asn737. Transmembrane regions (helical) follow at residues Leu762–Phe782 and Phe810–Ile830. Residues Gly764–Lys1051 enclose the ABC transmembrane type-1 2 domain. N-linked (GlcNAc...) asparagine glycosylation occurs at Asn860. The next 4 membrane-spanning stretches (helical) occupy residues Leu884–Phe904, Leu910–Leu930, Ala995–Leu1015, and Phe1025–Phe1045. An ABC transporter 2 domain is found at Ile1086–Met1324. Residue Asn1108 is glycosylated (N-linked (GlcNAc...) asparagine). Gly1121–Ser1128 provides a ligand contact to ATP.

Belongs to the ABC transporter superfamily. ABCB family. Multidrug resistance exporter (TC 3.A.1.201) subfamily.

The protein resides in the cell membrane. It carries out the reaction itraconazole(in) + ATP + H2O = itraconazole(out) + ADP + phosphate + H(+). Pleiotropic ABC efflux transporter that may be involved in the modulation susceptibility to a wide range of unrelated cytotoxic compounds. The sequence is that of ABC multidrug transporter MDR2 from Trichophyton equinum (strain ATCC MYA-4606 / CBS 127.97) (Horse ringworm fungus).